Here is a 497-residue protein sequence, read N- to C-terminus: MDFAIQAGDLGKYYGDCIVAGVFESRKLTEAAKALDEMCRGYLTKVLDQGDMDGRANTTLLLHNVPAIGSKRVLLVGLGKEEEYVEKVFLEAIRAAFKALHQTGVKDVGLCVADLIVKGRDTAWSVLQSTLLVEESVYRFDRLKSKREERQPSLQKIIFLIGDEAARAGAEQAFKQGAAIACGMNVTKDLGNLAPNICTPTYLAEQAGEMAKTYNLKLSVLEEKDMEALGMGALLAVARGSHQPAKLIVLEYHGREGIEKPVVLVGKGVTFDTGGISLKPAVDLDEMKYDMGGAASVFGTLTAVAEMKLPINVTAIIPTTENMPGGNATKPGDVVTSLSGQTIEILNTDAEGRLILCDALTYAERYNPDVVIDIATLTGACVVALGHVVSGLMGTDEPLVQELLQAGEKASDRAWQLPLGEEYQELLKSNFADMANIGGRWGGAITAACFLSRFTRKYRWAHLDIAGTAWKSGKEKGATGRPVPLLTQFLIDRAQQH.

Mn(2+) is bound by residues Lys-267 and Asp-272. Lys-279 is an active-site residue. Asp-290, Asp-349, and Glu-351 together coordinate Mn(2+). The active site involves Arg-353.

It belongs to the peptidase M17 family. Mn(2+) is required as a cofactor.

The protein resides in the cytoplasm. It catalyses the reaction Release of an N-terminal amino acid, Xaa-|-Yaa-, in which Xaa is preferably Leu, but may be other amino acids including Pro although not Arg or Lys, and Yaa may be Pro. Amino acid amides and methyl esters are also readily hydrolyzed, but rates on arylamides are exceedingly low.. The enzyme catalyses Release of an N-terminal amino acid, preferentially leucine, but not glutamic or aspartic acids.. Functionally, presumably involved in the processing and regular turnover of intracellular proteins. Catalyzes the removal of unsubstituted N-terminal amino acids from various peptides. The polypeptide is Probable cytosol aminopeptidase (Nitrosomonas eutropha (strain DSM 101675 / C91 / Nm57)).